Here is a 511-residue protein sequence, read N- to C-terminus: GMP synthase [glutamine-hydrolyzing] (511 aa).

The Glutamine amidotransferase type-1 domain occupies 5–195 (DILVLDFGSQ…AKYACNCESI (191 aa)). The Nucleophile role is filled by cysteine 82. Residues histidine 169 and glutamate 171 contribute to the active site. Positions 196-386 (WNMGSFAKTQ…LGLSKEVVYR (191 aa)) constitute a GMPS ATP-PPase domain. 223–229 (SGGVDSS) provides a ligand contact to ATP.

In terms of assembly, homodimer.

The enzyme catalyses XMP + L-glutamine + ATP + H2O = GMP + L-glutamate + AMP + diphosphate + 2 H(+). The protein operates within purine metabolism; GMP biosynthesis; GMP from XMP (L-Gln route): step 1/1. Its function is as follows. Catalyzes the synthesis of GMP from XMP. The polypeptide is GMP synthase [glutamine-hydrolyzing] (guaA) (Campylobacter jejuni subsp. jejuni serotype O:2 (strain ATCC 700819 / NCTC 11168)).